We begin with the raw amino-acid sequence, 452 residues long: UDP-N-acetylmuramate--L-alanine ligase (452 aa).

An ATP-binding site is contributed by 119–125 (GAHGKTS).

It belongs to the MurCDEF family.

Its subcellular location is the cytoplasm. The enzyme catalyses UDP-N-acetyl-alpha-D-muramate + L-alanine + ATP = UDP-N-acetyl-alpha-D-muramoyl-L-alanine + ADP + phosphate + H(+). Its pathway is cell wall biogenesis; peptidoglycan biosynthesis. Cell wall formation. The sequence is that of UDP-N-acetylmuramate--L-alanine ligase from Streptococcus mutans serotype c (strain ATCC 700610 / UA159).